The primary structure comprises 451 residues: Chromosomal replication initiator protein DnaA (451 aa).

A domain I, interacts with DnaA modulators region spans residues 1–73; the sequence is MQDNLPQIWE…SNALKQTTSK (73 aa). The interval 73–113 is domain II; the sequence is KNFEIRFIVPSEEKISKTEESQKKLEGSVNISVASDQFVSN. A domain III, AAA+ region region spans residues 114 to 330; sequence NLNPKYTFDT…GALIRIVAYS (217 aa). ATP is bound by residues glycine 158, glycine 160, lysine 161, and threonine 162. Residues 331 to 451 form a domain IV, binds dsDNA region; the sequence is SLTNSEITVE…ERIAKEIKGD (121 aa).

The protein belongs to the DnaA family. As to quaternary structure, oligomerizes as a right-handed, spiral filament on DNA at oriC.

It localises to the cytoplasm. In terms of biological role, plays an essential role in the initiation and regulation of chromosomal replication. ATP-DnaA binds to the origin of replication (oriC) to initiate formation of the DNA replication initiation complex once per cell cycle. Binds the DnaA box (a 9 base pair repeat at the origin) and separates the double-stranded (ds)DNA. Forms a right-handed helical filament on oriC DNA; dsDNA binds to the exterior of the filament while single-stranded (ss)DNA is stabiized in the filament's interior. The ATP-DnaA-oriC complex binds and stabilizes one strand of the AT-rich DNA unwinding element (DUE), permitting loading of DNA polymerase. After initiation quickly degrades to an ADP-DnaA complex that is not apt for DNA replication. Binds acidic phospholipids. This Alkaliphilus oremlandii (strain OhILAs) (Clostridium oremlandii (strain OhILAs)) protein is Chromosomal replication initiator protein DnaA.